We begin with the raw amino-acid sequence, 68 residues long: Small ribosomal subunit protein bS21 (68 aa).

The protein belongs to the bacterial ribosomal protein bS21 family.

This chain is Small ribosomal subunit protein bS21, found in Ruegeria pomeroyi (strain ATCC 700808 / DSM 15171 / DSS-3) (Silicibacter pomeroyi).